A 70-amino-acid chain; its full sequence is NAD(P)H-quinone oxidoreductase subunit L (70 aa).

Transmembrane regions (helical) follow at residues 2–22 and 39–59; these read IVAL…PIAV and LLMY…SPFA.

The protein belongs to the complex I NdhL subunit family. As to quaternary structure, NDH-1 can be composed of about 15 different subunits; different subcomplexes with different compositions have been identified which probably have different functions.

Its subcellular location is the cellular thylakoid membrane. The catalysed reaction is a plastoquinone + NADH + (n+1) H(+)(in) = a plastoquinol + NAD(+) + n H(+)(out). The enzyme catalyses a plastoquinone + NADPH + (n+1) H(+)(in) = a plastoquinol + NADP(+) + n H(+)(out). NDH-1 shuttles electrons from an unknown electron donor, via FMN and iron-sulfur (Fe-S) centers, to quinones in the respiratory and/or the photosynthetic chain. The immediate electron acceptor for the enzyme in this species is believed to be plastoquinone. Couples the redox reaction to proton translocation, and thus conserves the redox energy in a proton gradient. Cyanobacterial NDH-1 also plays a role in inorganic carbon-concentration. The chain is NAD(P)H-quinone oxidoreductase subunit L from Nostoc punctiforme (strain ATCC 29133 / PCC 73102).